Here is a 582-residue protein sequence, read N- to C-terminus: Semenogelin-2 (582 aa).

The first 23 residues, 1–23 (MKSIILFVLSLLLILEKQAAVMG), serve as a signal peptide directing secretion. Disordered stretches follow at residues 25 to 62 (KGGSKGQLSSGSSRFPHRHRSQHYSGQKDKQHTESKGS), 91 to 190 (HKTT…QGGS), and 272 to 553 (NLNQ…FSGA). The segment covering 50–59 (GQKDKQHTES) has biased composition (basic and acidic residues). Residues 92–134 (KTTKSKQHLRRHQRLLNYKQKGRGRVKPKRHFHLIVIHRKGGQ) are compositionally biased toward basic residues. Polar residues-rich tracts occupy residues 137–161 (HGTQNPSQDQGNSPSGKGISSQYSN) and 174–190 (EQASASGAQKGRTQGGS). The segment covering 293-305 (TEERQPNHEEKSV) has biased composition (basic and acidic residues). The span at 325 to 335 (KSQNQVTIPSQ) shows a compositional bias: polar residues. Basic and acidic residues predominate over residues 336-345 (DQEHGHKENK). Polar residues predominate over residues 385–395 (KSQNQVAIPSQ). Residues 396-405 (DQEHGHKENK) show a composition bias toward basic and acidic residues. A compositionally biased stretch (polar residues) spans 445 to 455 (KSQNQVTIPSQ). Over residues 456-465 (DQEHGHKENK) the composition is skewed to basic and acidic residues. Polar residues-rich tracts occupy residues 487–498 (KDVSQSSLSFQT) and 506–529 (SQIQTPNPNQGQWSGQNAKGNSGK). Residues 530–546 (SADRKQDLLSHEQEGRY) are compositionally biased toward basic and acidic residues.

This sequence belongs to the semenogelin family. Interacts with SERPINA5.

It localises to the secreted. In terms of biological role, participates in the formation of a gel matrix (sperm coagulum) entrapping the accessory gland secretions and ejaculated spermatozoa. This chain is Semenogelin-2 (SEMG2), found in Macaca fascicularis (Crab-eating macaque).